We begin with the raw amino-acid sequence, 25 residues long: Growth-blocking peptide (25 aa).

A disulfide bridge links Cys-7 with Cys-19. Gln-25 is subject to Glutamine amide.

Belongs to the GBP/PSP1/paralytic peptide family. Hemolymph.

Biogenic peptide that prevents, in lepidopteran, the onset of metamorphosis from larva to pupa. This growth-blocking peptide has repressive activity against juvenile hormone esterase. The sequence is that of Growth-blocking peptide from Cotesia kariyai (Parasitic wasp).